A 440-amino-acid chain; its full sequence is Xylose isomerase (440 aa).

Catalysis depends on residues H101 and D104. Mg(2+) is bound by residues E232, E268, H271, D296, D307, D309, and D339.

The protein belongs to the xylose isomerase family. Homotetramer. It depends on Mg(2+) as a cofactor.

The protein resides in the cytoplasm. The catalysed reaction is alpha-D-xylose = alpha-D-xylulofuranose. This chain is Xylose isomerase, found in Salmonella paratyphi B (strain ATCC BAA-1250 / SPB7).